The sequence spans 320 residues: Zygote arrest protein 1 (320 aa).

Disordered stretches follow at residues 106 to 130 (ELRR…EVRY) and 155 to 208 (DRPA…AEGS). Residues 222 to 305 (KYGYYHCREC…RQDLCGRCKG (84 aa)) form a 3CxxC-type zinc finger.

Belongs to the ZAR1 family.

It is found in the cytoplasm. The protein resides in the cytoplasmic ribonucleoprotein granule. Functionally, mRNA-binding protein required for maternal mRNA storage, translation and degradation during oocyte maturation. Probably promotes formation of some phase-separated membraneless compartment that stores maternal mRNAs in oocytes: acts by undergoing liquid-liquid phase separation upon binding to maternal mRNAs. Binds to the 3'-UTR of maternal mRNAs, inhibiting their translation. The sequence is that of Zygote arrest protein 1 from Takifugu rubripes (Japanese pufferfish).